The sequence spans 120 residues: NAD(P)H-quinone oxidoreductase subunit 3, chloroplastic (120 aa).

Helical transmembrane passes span 9 to 29, 64 to 84, and 88 to 108; these read IFWA…LISG, MFAL…PWAM, and VLGV…IVGS.

Belongs to the complex I subunit 3 family. As to quaternary structure, NDH is composed of at least 16 different subunits, 5 of which are encoded in the nucleus.

Its subcellular location is the plastid. The protein resides in the chloroplast thylakoid membrane. It catalyses the reaction a plastoquinone + NADH + (n+1) H(+)(in) = a plastoquinol + NAD(+) + n H(+)(out). The catalysed reaction is a plastoquinone + NADPH + (n+1) H(+)(in) = a plastoquinol + NADP(+) + n H(+)(out). Its function is as follows. NDH shuttles electrons from NAD(P)H:plastoquinone, via FMN and iron-sulfur (Fe-S) centers, to quinones in the photosynthetic chain and possibly in a chloroplast respiratory chain. The immediate electron acceptor for the enzyme in this species is believed to be plastoquinone. Couples the redox reaction to proton translocation, and thus conserves the redox energy in a proton gradient. This Carica papaya (Papaya) protein is NAD(P)H-quinone oxidoreductase subunit 3, chloroplastic.